We begin with the raw amino-acid sequence, 1507 residues long: Protein similar (1507 aa).

The disordered stretch occupies residues 1-85 (MVSLIDTIEA…KSRDAARCRR (85 aa)). The span at 26-49 (SASSSSCSSSFSSSPPSSSVGSPS) shows a compositional bias: low complexity. A compositionally biased stretch (basic and acidic residues) spans 72-85 (KRKEKSRDAARCRR). In terms of domain architecture, bHLH spans 72–125 (KRKEKSRDAARCRRSKETEIFMELSAALPLKTDDVNQLDKASVMRITIAFLKIR). 2 consecutive PAS domains span residues 167 to 240 (NGAE…LAQK) and 307 to 377 (PHPS…LSKG). The PAC domain maps to 381 to 422 (TSRYRFLGKYGGYCWILSQATIVYDKLKPQSVVCVNYVISNL). Disordered regions lie at residues 433-459 (QQTAASEQKEQHHQAAETEKEPEKAAD), 541-588 (HSPG…PPPT), 706-832 (TCST…CSPN), and 900-951 (YAGN…QAAV). Positions 439-459 (EQKEQHHQAAETEKEPEKAAD) are enriched in basic and acidic residues. Over residues 548 to 559 (ITAQLLSGSSSG) the composition is skewed to polar residues. Positions 578 to 588 (SPAPPLTPPPT) are enriched in pro residues. Residues 692 to 863 (TCLLPEDINS…IDDDMPLLTE (172 aa)) form an ODD region. Residues 706–717 (TCSTTASGQHYQ) show a composition bias toward polar residues. Low complexity-rich tracts occupy residues 718-745 (SPSSSSTSAPSNTSSSNNSYANSPLSPL) and 754-777 (SNPSHQQQQQHHNQQQQQQQQQQH). Positions 803 to 818 (DTSCSQHLHSPSITSK) are enriched in polar residues. 3 stretches are compositionally biased toward low complexity: residues 823–832 (SSLPSLCSPN), 907–918 (QQQQQQPQLQQQ), and 926–951 (SSPASTVSSLSPSPVQQHHQQQQAAV). Positions 880-908 (KEIDAIQQQLQQLQQQHHQQYAGNTGYQQ) form a coiled coil. 2 coiled-coil regions span residues 982–1054 (AEEC…YDVQ) and 1110–1162 (QLLQ…QLQQ). Disordered stretches follow at residues 1204–1228 (PQQQQHGNKRHLNSATGAGNPVESK), 1251–1287 (KDPAQQQTQAAKRAGSERWQLSAESKQQKQQQQQSNS), and 1356–1460 (FGGS…KTSI). A compositionally biased stretch (polar residues) spans 1413-1423 (SSTSNSTNQAE).

In terms of assembly, efficient DNA binding requires dimerization with another bHLH protein. Interacts with Vhl. In terms of tissue distribution, ubiquitously expressed in the embryo.

It localises to the cytoplasm. Its subcellular location is the nucleus. Functionally, functions as a transcriptional regulator of the adaptive response to hypoxia. Binds to core DNA sequence 5'-[AG]CGTG-3' within the hypoxia response element (HRE) of target gene promoters. The protein is Protein similar (sima) of Drosophila melanogaster (Fruit fly).